We begin with the raw amino-acid sequence, 118 residues long: uncharacterized protein (118 aa).

3 helical membrane passes run 17–37 (IIIIFYVITSMVQGNYHFAIL), 60–80 (INYTIIGTIIGQYTVLIIMIF), and 90–110 (YIEQILTTNLSIVGYAFGSFW).

It localises to the membrane. This is an uncharacterized protein from Acanthamoeba polyphaga mimivirus (APMV).